Reading from the N-terminus, the 513-residue chain is MQSVLVLDFGSQYTQLIARRIRELGIYSEILPYNTTPESIREHNPKAIILSGGPTSVYDASAILPDDGIFSLGIPMLGICYGLQVIAKHFGGEVASSSKHEFGRAKIMVAQDNEPESPLFHDIPDSDVWMSHGDKVMQLPEGFRVTASSENSEMCAFESFGSKGALKIYALQFHPEVQHTLYGKQLLSNFLITIAGITPDWSSKSFIEHQLEEISRKAGKETVICGISGGVDSTVAAVMVGKAIGKQLHCVFVDNGLLRKNEAEKVMTFLSTLGLRVTLVDASDLFLKRLKTVASPEKKRKIIGRTFIQVFEEQMEQEKFLVQGTLYPDVIESVSVKGPSETIKSHHNVGGLPKRMKLKLIEPLRELFKDEVRAVGRELGIAEDILMRHPFPGPGLAVRVLGSVTKERLDILRDADEIFIEELKSTGLYQKVWQAFAVLLPVQSVGVMGDKRTYENVLALRAVESSDGMTADWAQLPHDFLARVSNRIINEVRGINRVAYDISSKPPATIEWE.

In terms of domain architecture, Glutamine amidotransferase type-1 spans S3 to D200. C80 (nucleophile) is an active-site residue. Catalysis depends on residues H174 and E176. A GMPS ATP-PPase domain is found at W201–R388. Residue S228 to T234 participates in ATP binding.

Homodimer.

The enzyme catalyses XMP + L-glutamine + ATP + H2O = GMP + L-glutamate + AMP + diphosphate + 2 H(+). It participates in purine metabolism; GMP biosynthesis; GMP from XMP (L-Gln route): step 1/1. Functionally, catalyzes the synthesis of GMP from XMP. The sequence is that of GMP synthase [glutamine-hydrolyzing] from Pelodictyon phaeoclathratiforme (strain DSM 5477 / BU-1).